Here is a 157-residue protein sequence, read N- to C-terminus: SsrA-binding protein (157 aa).

The protein belongs to the SmpB family.

It localises to the cytoplasm. In terms of biological role, required for rescue of stalled ribosomes mediated by trans-translation. Binds to transfer-messenger RNA (tmRNA), required for stable association of tmRNA with ribosomes. tmRNA and SmpB together mimic tRNA shape, replacing the anticodon stem-loop with SmpB. tmRNA is encoded by the ssrA gene; the 2 termini fold to resemble tRNA(Ala) and it encodes a 'tag peptide', a short internal open reading frame. During trans-translation Ala-aminoacylated tmRNA acts like a tRNA, entering the A-site of stalled ribosomes, displacing the stalled mRNA. The ribosome then switches to translate the ORF on the tmRNA; the nascent peptide is terminated with the 'tag peptide' encoded by the tmRNA and targeted for degradation. The ribosome is freed to recommence translation, which seems to be the essential function of trans-translation. The sequence is that of SsrA-binding protein from Rhodococcus jostii (strain RHA1).